We begin with the raw amino-acid sequence, 137 residues long: Large ribosomal subunit protein uL16 (137 aa).

Belongs to the universal ribosomal protein uL16 family. As to quaternary structure, part of the 50S ribosomal subunit.

In terms of biological role, binds 23S rRNA and is also seen to make contacts with the A and possibly P site tRNAs. The protein is Large ribosomal subunit protein uL16 of Wolbachia sp. subsp. Brugia malayi (strain TRS).